We begin with the raw amino-acid sequence, 292 residues long: uncharacterized protein (292 aa).

A helical transmembrane segment spans residues 175–197; the sequence is VLNFYFTALPYAIDGIISGIGVF.

It localises to the membrane. This is an uncharacterized protein from Methanocaldococcus jannaschii (strain ATCC 43067 / DSM 2661 / JAL-1 / JCM 10045 / NBRC 100440) (Methanococcus jannaschii).